The sequence spans 753 residues: Serine/threonine-protein phosphatase with EF-hands 2 (753 aa).

In terms of domain architecture, IQ spans 21-46 (KAAALIQRWYRRYVARLEMRRRCTWS). The segment at 128-540 (ATALVEAFRL…PHIVQYQANK (413 aa)) is catalytic. Mn(2+) contacts are provided by Asp179, His181, Asp208, and Asn240. His241 (proton donor) is an active-site residue. A Mn(2+)-binding site is contributed by His292. Disordered stretches follow at residues 318–382 (CKTR…GSLD) and 409–435 (VTGE…KPTQ). The segment covering 322-333 (QKSEKQMEEKRR) has biased composition (basic and acidic residues). Residues 348-361 (LPESRSLPSSPLRL) are compositionally biased toward low complexity. The span at 366-377 (AQKTSRSSSIPC) shows a compositional bias: polar residues. His488 is a Mn(2+) binding site. EF-hand domains follow at residues 568–603 (AHSS…VLHL), 652–687 (RNRS…FSSH), and 692–727 (ITDD…VEKS). Ca(2+) contacts are provided by Asp665, Asp667, Ser669, Glu676, Asp705, Asn707, Asp709, His711, and Glu716. The tract at residues 732-753 (DASECPQATNAKDSGCSSPGAH) is disordered. Positions 737-753 (PQATNAKDSGCSSPGAH) are enriched in polar residues.

This sequence belongs to the PPP phosphatase family. Requires Mn(2+) as cofactor. Retinal specific.

It is found in the cytoplasm. The protein resides in the cell projection. It localises to the cilium. Its subcellular location is the photoreceptor outer segment. The protein localises to the photoreceptor inner segment. The catalysed reaction is O-phospho-L-seryl-[protein] + H2O = L-seryl-[protein] + phosphate. It carries out the reaction O-phospho-L-threonyl-[protein] + H2O = L-threonyl-[protein] + phosphate. Its activity is regulated as follows. Activated by calcium. May play a role in phototransduction. May dephosphorylate photoactivated rhodopsin. May function as a calcium sensing regulator of ionic currents, energy production or synaptic transmission. The polypeptide is Serine/threonine-protein phosphatase with EF-hands 2 (PPEF2) (Homo sapiens (Human)).